A 321-amino-acid chain; its full sequence is Phospho-N-acetylmuramoyl-pentapeptide-transferase (321 aa).

Helical transmembrane passes span 4–24 (MVWA…WLIP), 51–71 (TMGG…TVGF), 75–95 (SGVL…DDYI), 109–129 (QKFT…VYGI), 139–159 (GFEV…LLIV), 173–193 (GLAA…ASAG), 195–215 (SDVT…FLFF), 222–242 (MFMG…LALL), 247–267 (LILP…ILQV), and 297–317 (VVYT…LLAM).

Belongs to the glycosyltransferase 4 family. MraY subfamily. Mg(2+) serves as cofactor.

Its subcellular location is the cell membrane. The catalysed reaction is UDP-N-acetyl-alpha-D-muramoyl-L-alanyl-gamma-D-glutamyl-meso-2,6-diaminopimeloyl-D-alanyl-D-alanine + di-trans,octa-cis-undecaprenyl phosphate = di-trans,octa-cis-undecaprenyl diphospho-N-acetyl-alpha-D-muramoyl-L-alanyl-D-glutamyl-meso-2,6-diaminopimeloyl-D-alanyl-D-alanine + UMP. It functions in the pathway cell wall biogenesis; peptidoglycan biosynthesis. In terms of biological role, catalyzes the initial step of the lipid cycle reactions in the biosynthesis of the cell wall peptidoglycan: transfers peptidoglycan precursor phospho-MurNAc-pentapeptide from UDP-MurNAc-pentapeptide onto the lipid carrier undecaprenyl phosphate, yielding undecaprenyl-pyrophosphoryl-MurNAc-pentapeptide, known as lipid I. This Heliobacterium modesticaldum (strain ATCC 51547 / Ice1) protein is Phospho-N-acetylmuramoyl-pentapeptide-transferase.